Consider the following 346-residue polypeptide: 3-isopropylmalate dehydrogenase (346 aa).

76–87 (GPQWTDPNNRPE) provides a ligand contact to NAD(+). Residues arginine 94, arginine 104, arginine 132, and aspartate 217 each contribute to the substrate site. Residues aspartate 217, aspartate 241, and aspartate 245 each coordinate Mg(2+). NAD(+) is bound at residue 275-287 (GSAPDIANQNLAN).

Belongs to the isocitrate and isopropylmalate dehydrogenases family. LeuB type 1 subfamily. In terms of assembly, homodimer. It depends on Mg(2+) as a cofactor. Mn(2+) serves as cofactor.

Its subcellular location is the cytoplasm. The catalysed reaction is (2R,3S)-3-isopropylmalate + NAD(+) = 4-methyl-2-oxopentanoate + CO2 + NADH. Its pathway is amino-acid biosynthesis; L-leucine biosynthesis; L-leucine from 3-methyl-2-oxobutanoate: step 3/4. Its function is as follows. Catalyzes the oxidation of 3-carboxy-2-hydroxy-4-methylpentanoate (3-isopropylmalate) to 3-carboxy-4-methyl-2-oxopentanoate. The product decarboxylates to 4-methyl-2 oxopentanoate. This Staphylococcus haemolyticus (strain JCSC1435) protein is 3-isopropylmalate dehydrogenase.